The primary structure comprises 381 residues: Flagellar P-ring protein (381 aa).

Positions M1 to A33 are cleaved as a signal peptide.

Belongs to the FlgI family. The basal body constitutes a major portion of the flagellar organelle and consists of four rings (L,P,S, and M) mounted on a central rod.

It localises to the periplasm. The protein localises to the bacterial flagellum basal body. Its function is as follows. Assembles around the rod to form the L-ring and probably protects the motor/basal body from shearing forces during rotation. The sequence is that of Flagellar P-ring protein from Albidiferax ferrireducens (strain ATCC BAA-621 / DSM 15236 / T118) (Rhodoferax ferrireducens).